We begin with the raw amino-acid sequence, 160 residues long: Phosphopantetheine adenylyltransferase (160 aa).

S10 is a binding site for substrate. ATP is bound by residues 10–11 (SF) and H18. K42, T74, and R88 together coordinate substrate. ATP-binding positions include 89 to 91 (GLR), E99, and 124 to 130 (YSFISST).

The protein belongs to the bacterial CoaD family. As to quaternary structure, homohexamer. The cofactor is Mg(2+).

The protein resides in the cytoplasm. It carries out the reaction (R)-4'-phosphopantetheine + ATP + H(+) = 3'-dephospho-CoA + diphosphate. Its pathway is cofactor biosynthesis; coenzyme A biosynthesis; CoA from (R)-pantothenate: step 4/5. In terms of biological role, reversibly transfers an adenylyl group from ATP to 4'-phosphopantetheine, yielding dephospho-CoA (dPCoA) and pyrophosphate. This is Phosphopantetheine adenylyltransferase from Leptospira borgpetersenii serovar Hardjo-bovis (strain L550).